The following is a 947-amino-acid chain: Bifunctional glutamine synthetase adenylyltransferase/adenylyl-removing enzyme (947 aa).

The interval Met1–Glu440 is adenylyl removase. The tract at residues Ser450–Val947 is adenylyl transferase.

It belongs to the GlnE family. The cofactor is Mg(2+).

The catalysed reaction is [glutamine synthetase]-O(4)-(5'-adenylyl)-L-tyrosine + phosphate = [glutamine synthetase]-L-tyrosine + ADP. The enzyme catalyses [glutamine synthetase]-L-tyrosine + ATP = [glutamine synthetase]-O(4)-(5'-adenylyl)-L-tyrosine + diphosphate. Involved in the regulation of glutamine synthetase GlnA, a key enzyme in the process to assimilate ammonia. When cellular nitrogen levels are high, the C-terminal adenylyl transferase (AT) inactivates GlnA by covalent transfer of an adenylyl group from ATP to specific tyrosine residue of GlnA, thus reducing its activity. Conversely, when nitrogen levels are low, the N-terminal adenylyl removase (AR) activates GlnA by removing the adenylyl group by phosphorolysis, increasing its activity. The regulatory region of GlnE binds the signal transduction protein PII (GlnB) which indicates the nitrogen status of the cell. In Salmonella paratyphi C (strain RKS4594), this protein is Bifunctional glutamine synthetase adenylyltransferase/adenylyl-removing enzyme.